The primary structure comprises 193 residues: Secreted RxLR effector protein 126 (193 aa).

The N-terminal stretch at 1–20 (MRYLLAVLIAAAFVISSGTS) is a signal peptide. The short motif at 50-64 (RMLQTKAVNGLEEER) is the RxLR-dEER element.

It belongs to the RxLR effector family.

It is found in the secreted. It localises to the host membrane. Its function is as follows. Secreted effector that completely suppresses the host cell death induced by cell death-inducing proteins. The protein is Secreted RxLR effector protein 126 of Plasmopara viticola (Downy mildew of grapevine).